The sequence spans 179 residues: NADH:FAD oxidoreductase (179 aa).

48–51 contacts FAD; it reads TCSA. 54–57 contacts NAD(+); the sequence is SVCD. FAD is bound by residues 65–71, Ala99, 104–109, and Ser144; these read CINRKSY and VPMEER. NAD(+) is bound by residues His145 and 166 to 169; that span reads YHRR. Tyr166 contacts FAD.

It belongs to the non-flavoprotein flavin reductase family. In terms of assembly, homodimer. The chlorophenol-4-monooxygenase is composed of an oxygenase component TftD and a reductase component TftC.

The enzyme catalyses FADH2 + NAD(+) = FAD + NADH + 2 H(+). Its pathway is xenobiotic degradation. Reductase component of a two-component system that degrades 2,4,5-trichlorophenol. TftC provides the FADH(2) required by TftD. TftD oxidizes 2,4,5-trichlorophenol (2,4,5-TCP) to 2,5-dichloro-p-benzoquinone, which is chemically reduced to 2,5-dichloro-p-hydroquinone (2,5-DiCHQ). Then, TftD oxidizes the latter to 5-chloro-2-hydroxy-p-benzoquinone. The sequence is that of NADH:FAD oxidoreductase (tftC) from Burkholderia cepacia (Pseudomonas cepacia).